A 310-amino-acid polypeptide reads, in one-letter code: L-lactate dehydrogenase (310 aa).

NAD(+) is bound by residues Val-17, Asp-38, Lys-43, Tyr-69, and 83 to 84 (GA). Substrate contacts are provided by Gln-86 and Arg-92. NAD(+) contacts are provided by residues Ser-105, 122-124 (ATN), and Ser-147. 124–127 (NPVD) is a binding site for substrate. 152 to 155 (DTAR) is a substrate binding site. Beta-D-fructose 1,6-bisphosphate is bound by residues Arg-157 and His-172. The Proton acceptor role is filled by His-179. Tyr-218 carries the phosphotyrosine modification. Thr-227 serves as a coordination point for substrate.

Belongs to the LDH/MDH superfamily. LDH family. In terms of assembly, homotetramer.

The protein resides in the cytoplasm. The enzyme catalyses (S)-lactate + NAD(+) = pyruvate + NADH + H(+). The protein operates within fermentation; pyruvate fermentation to lactate; (S)-lactate from pyruvate: step 1/1. Its activity is regulated as follows. Allosterically activated by fructose 1,6-bisphosphate (FBP). Catalyzes the conversion of lactate to pyruvate. This Halalkalibacterium halodurans (strain ATCC BAA-125 / DSM 18197 / FERM 7344 / JCM 9153 / C-125) (Bacillus halodurans) protein is L-lactate dehydrogenase.